The sequence spans 92 residues: PqqA binding protein (92 aa).

It belongs to the PqqD family. In terms of assembly, monomer. Interacts with PqqE.

It participates in cofactor biosynthesis; pyrroloquinoline quinone biosynthesis. Its function is as follows. Functions as a PqqA binding protein and presents PqqA to PqqE, in the pyrroloquinoline quinone (PQQ) biosynthetic pathway. The chain is PqqA binding protein from Xanthomonas oryzae pv. oryzae (strain PXO99A).